The chain runs to 150 residues: Transcriptional regulator MraZ (150 aa).

2 SpoVT-AbrB domains span residues 7 to 55 (SHAI…PEPE) and 84 to 127 (AALM…SEES).

Belongs to the MraZ family. As to quaternary structure, forms oligomers.

It localises to the cytoplasm. The protein localises to the nucleoid. In Marinobacter nauticus (strain ATCC 700491 / DSM 11845 / VT8) (Marinobacter aquaeolei), this protein is Transcriptional regulator MraZ.